The primary structure comprises 237 residues: Phosphoribosylaminoimidazole-succinocarboxamide synthase (237 aa).

The protein belongs to the SAICAR synthetase family.

It catalyses the reaction 5-amino-1-(5-phospho-D-ribosyl)imidazole-4-carboxylate + L-aspartate + ATP = (2S)-2-[5-amino-1-(5-phospho-beta-D-ribosyl)imidazole-4-carboxamido]succinate + ADP + phosphate + 2 H(+). It participates in purine metabolism; IMP biosynthesis via de novo pathway; 5-amino-1-(5-phospho-D-ribosyl)imidazole-4-carboxamide from 5-amino-1-(5-phospho-D-ribosyl)imidazole-4-carboxylate: step 1/2. The sequence is that of Phosphoribosylaminoimidazole-succinocarboxamide synthase from Pectobacterium atrosepticum (strain SCRI 1043 / ATCC BAA-672) (Erwinia carotovora subsp. atroseptica).